We begin with the raw amino-acid sequence, 1243 residues long: Zinc finger protein ZFAT (1243 aa).

The C2H2-type 1 zinc-finger motif lies at 12-35; it reads FMCKCCNLFSPNQSELLSHVSEKH. Disordered stretches follow at residues 51–116 and 147–189; these read PLST…PSSL and GEAG…GKEA. Residues 70–81 show a composition bias toward basic residues; it reads MKRKRGRPKGST. The C2H2-type 2; degenerate zinc-finger motif lies at 116-141; that stretch reads LECSKCCRKFSNTRQLRKHICIIVLN. The segment covering 156–189 has biased composition (basic and acidic residues); it reads ELEKKCKEDDREKASKRPRSQKTEKVQKISGKEA. 7 C2H2-type zinc fingers span residues 271 to 293, 299 to 321, 326 to 349, 354 to 377, 404 to 426, 432 to 454, and 458 to 481; these read FTCE…LRIH, YKCP…LRKH, FACD…ERVH, QHCR…RDAH, YDCH…MLVH, FACE…VRKH, and YVCA…KEVH. Zn(2+) contacts are provided by Cys273, Cys276, His289, His293, Cys301, Cys304, His317, His321, Cys328, Cys331, His344, His349, Cys356, Cys359, His372, His377, Cys406, Cys409, His422, and His426. The Zn(2+) site is built by Cys460, Cys463, His476, and His481. Disordered stretches follow at residues 534-570, 603-625, and 638-705; these read EACP…AEST, TSSA…SSVQ, and AQSA…CKAA. The span at 610 to 620 shows a compositional bias: basic and acidic residues; the sequence is AAPEKPPDMQH. Residues 638-650 show a composition bias toward polar residues; sequence AQSAGSDQESHGA. 10 consecutive C2H2-type zinc fingers follow at residues 742–764, 770–793, 798–822, 830–853, 880–903, 909–931, 937–959, 966–988, 994–1017, and 1041–1064; these read LECE…VRTH, YYCS…IQKH, LKCP…LKVH, YSCP…KTNH, MKCP…IWAH, FKCS…MNRH, HLCD…KLLH, FKCT…MEQH, FRCA…NRKH, and LKCP…KNKH. Zn(2+) is bound by residues Cys772, Cys775, His788, His793, Cys800, Cys805, His818, His822, Cys832, Cys835, His848, His853, Cys882, Cys885, His899, His903, Cys911, Cys914, His927, His931, Cys939, Cys942, His955, and Leu958.

As to expression, isoform 1 is strongly expressed in placenta, spleen, kidney, testis and peripheral blood leukocytes. Expressed in CD4+ and CD8+ T-cells, CD19+ B-cells and CB14+ monocytes. Isoform 3 is strongly expressed in placenta, ovary, tonsil, CD19+ B-cells and CD14+ monocytes.

The protein resides in the nucleus. It localises to the cytoplasm. Its subcellular location is the cytosol. May be involved in transcriptional regulation. Overexpression causes down-regulation of a number of genes involved in the immune response. Some genes are also up-regulated. In Homo sapiens (Human), this protein is Zinc finger protein ZFAT (ZFAT).